A 447-amino-acid chain; its full sequence is Signal recognition particle 54 kDa protein (447 aa).

GTP-binding positions include 108–115 (GLYGMGKT), 188–192 (DTAGR), and 246–249 (TKLD).

Belongs to the GTP-binding SRP family. SRP54 subfamily. Part of the signal recognition particle protein translocation system, which is composed of SRP and FtsY. Archaeal SRP consists of a 7S RNA molecule of 300 nucleotides and two protein subunits: SRP54 and SRP19.

Its subcellular location is the cytoplasm. The catalysed reaction is GTP + H2O = GDP + phosphate + H(+). Its function is as follows. Involved in targeting and insertion of nascent membrane proteins into the cytoplasmic membrane. Binds to the hydrophobic signal sequence of the ribosome-nascent chain (RNC) as it emerges from the ribosomes. The SRP-RNC complex is then targeted to the cytoplasmic membrane where it interacts with the SRP receptor FtsY. The chain is Signal recognition particle 54 kDa protein from Methanopyrus kandleri (strain AV19 / DSM 6324 / JCM 9639 / NBRC 100938).